Reading from the N-terminus, the 198-residue chain is Auxin-binding protein 1 (198 aa).

Residues 1 to 33 (MIVLSVGSASSSPIVVVFSVALLLFYFSETSLG) form the signal peptide. C36 and C189 are disulfide-bonded. Zn(2+) is bound by residues H92, H94, and E98. The N-linked (GlcNAc...) asparagine glycan is linked to N130. H141 is a binding site for Zn(2+). The Prevents secretion from ER motif lies at 195–198 (KDEL).

In terms of assembly, homodimer. May interact with the GPI-anchored plasma membrane protein SKU5 and its family members. Interacts with TMK1 (via extracellular domain). Glycosylated. In terms of processing, ubiquitinated by RMA2, leading to proteasomal degradation.

It is found in the endoplasmic reticulum lumen. It localises to the cell membrane. Auxin receptor that controls cell elongation and cell division. Involved in embryonic morphogenesis. Acts on the cell cycle, endocycle, cell plate formation, and cell expansion and contributes to the control of auxin-related gene expression. Controls root meristem size and mediates auxin responsiveness. Involved in activation of ROP GTPases in response to auxin and regulation of clathrin-mediated endocytosis in roots. Acts as a positive factor in clathrin recruitment to the plasma membrane, thereby promoting endocytosis. Upon auxin binding, restricts the internalization of PIN proteins by inhibiting clathrin-mediated endocytosis. Promotes auxin-triggered phosphorylation status modulation of RAF-like kinases (e.g. RAF20 and RAF24). Involved in the regulation of polar auxin transport. Behaves as a negative regulator of the SCF(TIR1/AFB) signaling pathway, protecting AUX/IAA repressors from degradation. Regulates the expression of cell wall remodeling genes via an SCF(TIR1/AFB)-dependent pathway. Involved in the modulation of hemicellulose xyloglucan structure. Required for rapid auxin-mediated re-orientation of microtubules to regulate cell elongation in roots and dark-grown hypocotyls as well as asymmetric growth during gravitropic responses. Involved in the shade avoidance response. Forms with TMK1 a cell surface auxin perception complex that activates ROP signaling pathways. ABP1 sensing of auxin is important for the ABP1-TMK1 complex formation. Interacts functionally with phytochrome to regulate growth. This chain is Auxin-binding protein 1, found in Arabidopsis thaliana (Mouse-ear cress).